The primary structure comprises 70 residues: Protein SlyX homolog (70 aa).

Belongs to the SlyX family.

The sequence is that of Protein SlyX homolog from Shewanella sp. (strain MR-7).